The chain runs to 361 residues: Phospho-N-acetylmuramoyl-pentapeptide-transferase (361 aa).

The next 10 helical transmembrane spans lie at 26–46 (AILGILTALLISLVIGPVMIR), 73–93 (TMGGALILVAIAISTLLWADL), 97–117 (YVWVVLLVTLLFGAIGWVDDY), 134–154 (YFWQSVIGATAAIVLYVTASM), 168–188 (VSLTLGPVLFILLTYFVIVGS), 200–220 (GLAIMPTVMVAGALAIFAYLS), 237–257 (TGELIIFCGALVGAGLGFLWF), 264–284 (VFMGDVGALALGAALGTVAVI), 289–309 (IVLFIMGGVFVMETISVILQV), and 340–360 (IVRFWVVTVVLVLIGLASLKI).

Belongs to the glycosyltransferase 4 family. MraY subfamily. Mg(2+) is required as a cofactor.

It is found in the cell inner membrane. The catalysed reaction is UDP-N-acetyl-alpha-D-muramoyl-L-alanyl-gamma-D-glutamyl-meso-2,6-diaminopimeloyl-D-alanyl-D-alanine + di-trans,octa-cis-undecaprenyl phosphate = di-trans,octa-cis-undecaprenyl diphospho-N-acetyl-alpha-D-muramoyl-L-alanyl-D-glutamyl-meso-2,6-diaminopimeloyl-D-alanyl-D-alanine + UMP. Its pathway is cell wall biogenesis; peptidoglycan biosynthesis. Functionally, catalyzes the initial step of the lipid cycle reactions in the biosynthesis of the cell wall peptidoglycan: transfers peptidoglycan precursor phospho-MurNAc-pentapeptide from UDP-MurNAc-pentapeptide onto the lipid carrier undecaprenyl phosphate, yielding undecaprenyl-pyrophosphoryl-MurNAc-pentapeptide, known as lipid I. This chain is Phospho-N-acetylmuramoyl-pentapeptide-transferase, found in Marinobacter nauticus (strain ATCC 700491 / DSM 11845 / VT8) (Marinobacter aquaeolei).